A 632-amino-acid chain; its full sequence is tRNA uridine 5-carboxymethylaminomethyl modification enzyme MnmG (632 aa).

Residues 13–18 (GGGHAG), Val-125, and Ser-180 contribute to the FAD site. 273 to 287 (GPRYCPSIEDKVMRF) is a binding site for NAD(+). Gln-370 contributes to the FAD binding site.

It belongs to the MnmG family. As to quaternary structure, homodimer. Heterotetramer of two MnmE and two MnmG subunits. FAD is required as a cofactor.

Its subcellular location is the cytoplasm. Functionally, NAD-binding protein involved in the addition of a carboxymethylaminomethyl (cmnm) group at the wobble position (U34) of certain tRNAs, forming tRNA-cmnm(5)s(2)U34. The protein is tRNA uridine 5-carboxymethylaminomethyl modification enzyme MnmG of Proteus mirabilis (strain HI4320).